The following is a 385-amino-acid chain: Leucine aminopeptidase 1 (385 aa).

Positions 1 to 19 (MKFPNLLSLGVAASTTVLA) are cleaved as a signal peptide. Residues 20–87 (AVPNQKPIGD…FPRTFAQTTV (68 aa)) constitute a propeptide that is removed on maturation. The N-linked (GlcNAc...) asparagine glycan is linked to asparagine 177. Zn(2+) is bound by residues histidine 185, aspartate 204, glutamate 243, and aspartate 270. A disulfide bond links cysteine 319 and cysteine 323. A Zn(2+)-binding site is contributed by histidine 352.

This sequence belongs to the peptidase M28 family. M28E subfamily. In terms of assembly, monomer. Zn(2+) serves as cofactor.

The protein localises to the secreted. Extracellular aminopeptidase that allows assimilation of proteinaceous substrates. This is Leucine aminopeptidase 1 (LAP1) from Ajellomyces capsulatus (strain H88) (Darling's disease fungus).